Consider the following 575-residue polypeptide: MDFPTISRSPSGPPAMDLEGPRDILVPSEDLTPDSQWDPMPGGPGSLSRMELDESSLQELVQQFEALPGDLVGPSPGGAPCPLHIATGHGLASQEIADAHGLLSAEAGRDDLLGLLHCEECPPSQTGPEEPLEPAPRLLQPPEDPDEDSDSPEWVEGASAEQEGSRSSSSSPEPWLETVPLVTPEEPPAGAQSPETLASYPAPQEVPGPCDHEDLLDGVIFGARYLGSTQLVSERNPPTSTRMAQAREAMDRVKAPDGETQPMTEVDLFVSTKRIKVLTADSQEAMMDHALHTISYTADIGCVLVLMARRRLARRPAPQDHGRRLYKMLCHVFYAEDAQLIAQAIGQAFAAAYSQFLRESGIDPSQVGVHPSPGACHLHNGDLDHFSNSDNCREVHLEKRRGEGLGVALVESGWGSLLPTAVIANLLHGGPAERSGALSIGDRLTAINGTSLVGLPLAACQAAVRETKSQTSVTLSIVHCPPVTTAIIHRPHAREQLGFCVEDGIICSLLRGGIAERGGIRVGHRIIEINGQSVVATPHARIIELLTEAYGEVHIKTMPAATYRLLTGQEQPVYL.

Met-1 is modified (N-acetylmethionine). Polar residues predominate over residues 1–10; that stretch reads MDFPTISRSP. Disordered regions lie at residues 1–50 and 118–211; these read MDFP…LSRM and CEEC…GPCD. At Ser-11 the chain carries Phosphoserine. The segment covering 143-153 has biased composition (acidic residues); that stretch reads EDPDEDSDSPE. The span at 156-184 shows a compositional bias: low complexity; sequence EGASAEQEGSRSSSSSPEPWLETVPLVTP. Ser-171 is modified (phosphoserine). Residues 215–364 are required for interaction with NECAB3; that stretch reads LLDGVIFGAR…QFLRESGIDP (150 aa). In terms of domain architecture, PID spans 217–381; sequence DGVIFGARYL…SPGACHLHNG (165 aa). Phosphoserine is present on Ser-372. 2 consecutive PDZ domains span residues 394–480 and 485–560; these read EVHL…IVHC and TAII…TMPA.

As to quaternary structure, binds to the cytoplasmic domain of amyloid protein (APP) in vivo. Interacts with HIF1AN (via N-terminus). Interacts with NECAB3; seems to mediate the interaction between NECAB3 and HIF1AN. As to expression, expressed in all tissues examined with lower levels in brain and testis.

It localises to the cytoplasm. The protein localises to the perinuclear region. Functionally, may modulate processing of the amyloid-beta precursor protein (APP) and hence formation of APP-beta. May enhance the activity of HIF1A in macrophages by inhibiting the activity of HIF1AN. In Homo sapiens (Human), this protein is Amyloid-beta A4 precursor protein-binding family A member 3 (APBA3).